A 572-amino-acid chain; its full sequence is MRTSQYLLSTQKETPADAEVISHQLMLRAGMIRKLASGLYTWLPTGVRVLKKVENIVREEMNNAGAIEVSMPVVQPADLWQESGRWEQYGPELLRFVDRGERPFVLGPTHEEVITDLIRGEINSYKQLPLNFFQIQTKFRDEVRPRFGVMRAREFLMKDAYSFHTTQESLQETYDAMYTAYSKIFSRMDLNFRAVLADTGSIGGSASHEFQVLAESGEDDIVFSTGSDYAANIEFAEALAPTEPRAPATEELRIVDTPNAKTIAELVEQFKLPIEKTVKTLLVHAHEESGHKLVALLVRGDHDLNEIKAEKLPQVAKPLTFASEEEIRAAIGAGPGSLGPVNLSLPVIADHSVAVMSDFGAGANIDGKHYFGINWERDLALPLVADLRNVVEGDISPDGKGTLQIKRGIEVGHIFQLGTKYSEVMKATVQGEDGRNQVMTMGCYGIGVSRVVAAAIEQNHDDRGIIWPDAIAPFQVAILPMNMHKSFRVKELAEELYTTLRSHGIDVILDDRKERPGVMFADMELIGVPHNIVIGDRNLDSEEVEYKNRRVGEKQMIKTSEIVEFLLSQIKR.

Belongs to the class-II aminoacyl-tRNA synthetase family. ProS type 1 subfamily. In terms of assembly, homodimer.

The protein localises to the cytoplasm. It catalyses the reaction tRNA(Pro) + L-proline + ATP = L-prolyl-tRNA(Pro) + AMP + diphosphate. Catalyzes the attachment of proline to tRNA(Pro) in a two-step reaction: proline is first activated by ATP to form Pro-AMP and then transferred to the acceptor end of tRNA(Pro). As ProRS can inadvertently accommodate and process non-cognate amino acids such as alanine and cysteine, to avoid such errors it has two additional distinct editing activities against alanine. One activity is designated as 'pretransfer' editing and involves the tRNA(Pro)-independent hydrolysis of activated Ala-AMP. The other activity is designated 'posttransfer' editing and involves deacylation of mischarged Ala-tRNA(Pro). The misacylated Cys-tRNA(Pro) is not edited by ProRS. This Yersinia pestis bv. Antiqua (strain Antiqua) protein is Proline--tRNA ligase.